Consider the following 68-residue polypeptide: Metallothionein (68 aa).

A divalent metal cation contacts are provided by C7, C9, C14, C16, C20, C22, C25, C27, C35, C39, C40, C42, C43, C47, C50, C54, C56, C64, C66, and C67.

Belongs to the metallothionein superfamily. Type 1 family.

Functionally, metallothioneins have a high content of cysteine residues that bind various heavy metals. This Scyliorhinus torazame (Cloudy catshark) protein is Metallothionein (mt).